Here is a 250-residue protein sequence, read N- to C-terminus: Geranylgeranylglyceryl phosphate synthase (250 aa).

Positions 26 and 55 each coordinate Mg(2+). Sn-glycerol 1-phosphate is bound by residues 174 to 180, 205 to 206, and 227 to 228; these read YLEAGSG, GG, and GT.

Belongs to the GGGP/HepGP synthase family. Group II subfamily. Mg(2+) is required as a cofactor.

It localises to the cytoplasm. The catalysed reaction is sn-glycerol 1-phosphate + (2E,6E,10E)-geranylgeranyl diphosphate = sn-3-O-(geranylgeranyl)glycerol 1-phosphate + diphosphate. It functions in the pathway membrane lipid metabolism; glycerophospholipid metabolism. In terms of biological role, prenyltransferase that catalyzes the transfer of the geranylgeranyl moiety of geranylgeranyl diphosphate (GGPP) to the C3 hydroxyl of sn-glycerol-1-phosphate (G1P). This reaction is the first ether-bond-formation step in the biosynthesis of archaeal membrane lipids. This Nitrosopumilus maritimus (strain SCM1) protein is Geranylgeranylglyceryl phosphate synthase.